The primary structure comprises 311 residues: Malate dehydrogenase (311 aa).

NAD(+)-binding positions include 7-12 (GAGNVG) and Asp-32. Substrate-binding residues include Arg-82 and Arg-88. NAD(+)-binding positions include Asn-95 and 118–120 (VSN). Substrate contacts are provided by Asn-120 and Arg-151. The Proton acceptor role is filled by His-175.

This sequence belongs to the LDH/MDH superfamily. MDH type 3 family.

It carries out the reaction (S)-malate + NAD(+) = oxaloacetate + NADH + H(+). Its function is as follows. Catalyzes the reversible oxidation of malate to oxaloacetate. The protein is Malate dehydrogenase of Flavobacterium johnsoniae (strain ATCC 17061 / DSM 2064 / JCM 8514 / BCRC 14874 / CCUG 350202 / NBRC 14942 / NCIMB 11054 / UW101) (Cytophaga johnsonae).